The sequence spans 51 residues: Insulin (51 aa).

3 disulfide bridges follow: Cys7/Cys37, Cys19/Cys50, and Cys36/Cys41.

This sequence belongs to the insulin family. In terms of assembly, heterodimer of a B chain and an A chain linked by two disulfide bonds.

The protein resides in the secreted. In terms of biological role, insulin decreases blood glucose concentration. It increases cell permeability to monosaccharides, amino acids and fatty acids. It accelerates glycolysis, the pentose phosphate cycle, and glycogen synthesis in liver. The chain is Insulin (INS) from Balaenoptera physalus (Fin whale).